A 416-amino-acid polypeptide reads, in one-letter code: Na(+)/H(+) antiporter NhaA (416 aa).

9 consecutive transmembrane segments (helical) span residues 18–38, 59–79, 97–117, 127–147, 167–187, 265–285, 297–317, 333–353, and 363–383; these read VGGAILLVAAAIALLWVNSPW, LTLADWTKDGLLAVFFFVAGL, ALPIIAAVGGVVTPALIAAVI, GWAIPVATDIAFALGVLALTG, LLAIILIAVLFTVGVSLLWLL, GICVPLFALFAAGVPLNATVF, VMLGLLLGKTIGIFGISWVAI, MFALSVLGAIGFTVSLLVAEL, and LAKAAVLITSLAASLAGSALL. A disordered region spans residues 396–416; sequence ALELQPDEGDASDPSEGGSLR.

This sequence belongs to the NhaA Na(+)/H(+) (TC 2.A.33) antiporter family.

The protein resides in the cell membrane. The catalysed reaction is Na(+)(in) + 2 H(+)(out) = Na(+)(out) + 2 H(+)(in). In terms of biological role, na(+)/H(+) antiporter that extrudes sodium in exchange for external protons. This chain is Na(+)/H(+) antiporter NhaA, found in Nocardia farcinica (strain IFM 10152).